The primary structure comprises 345 residues: Ribosomal RNA small subunit methyltransferase C (345 aa).

The protein belongs to the methyltransferase superfamily. RsmC family. As to quaternary structure, monomer.

The protein localises to the cytoplasm. The catalysed reaction is guanosine(1207) in 16S rRNA + S-adenosyl-L-methionine = N(2)-methylguanosine(1207) in 16S rRNA + S-adenosyl-L-homocysteine + H(+). Specifically methylates the guanine in position 1207 of 16S rRNA in the 30S particle. This chain is Ribosomal RNA small subunit methyltransferase C, found in Shewanella denitrificans (strain OS217 / ATCC BAA-1090 / DSM 15013).